The sequence spans 489 residues: Equilibrative nucleobase transporter 1 (489 aa).

The chain crosses the membrane as a helical span at residues 17–37; sequence LLECLGFAGVLFGWTSLVFVF. Asn56 carries N-linked (GlcNAc...) asparagine glycosylation. A run of 4 helical transmembrane segments spans residues 72–92, 102–122, 123–143, and 158–180; these read LIFT…GYIF, LIAI…SADS, AVLL…FLIT, and IITM…KLLY. The residue at position 253 (Ser253) is a Phosphoserine. At Thr258 the chain carries Phosphothreonine. A run of 6 helical transmembrane segments spans residues 277 to 297, 318 to 338, 358 to 380, 402 to 422, 426 to 446, and 455 to 475; these read FAWH…FIGT, NAFA…GLLM, AAAL…GFAV, SFLY…EHFG, GLVM…FTLI, and LYVN…PFLV.

Belongs to the SLC43A transporter (TC 2.A.1.44) family.

The protein localises to the basolateral cell membrane. It catalyses the reaction adenine(out) = adenine(in). It carries out the reaction guanine(out) = guanine(in). The catalysed reaction is hypoxanthine(out) = hypoxanthine(in). Sodium-independent purine-selective nucleobase transporter which mediates the equilibrative transport of extracellular purine nucleobases such as adenine, guanine and hypoxanthine. May regulate fatty acid (FA) transport in adipocytes, acting as a positive regulator of FA efflux and as a negative regulator of FA uptake. In Bos taurus (Bovine), this protein is Equilibrative nucleobase transporter 1 (SLC43A3).